The chain runs to 559 residues: Germacrene A synthase (559 aa).

Residues D312, D316, D456, T460, and E464 each contribute to the Mg(2+) site. Positions 312–316 match the DDXXD motif motif; the sequence is DDTYD.

The protein belongs to the terpene synthase family. Monomer. The cofactor is Mg(2+). Expressed in glandular trichomes of all aerial tissues, with highest levels in tissues accumulating parthenolide (e.g. flowers and, to some extent, leaves).

It catalyses the reaction (2E,6E)-farnesyl diphosphate = (+)-(R)-germacrene A + diphosphate. Its pathway is secondary metabolite biosynthesis; terpenoid biosynthesis. In terms of biological role, sesquiterpene synthase involved in germacrene A biosynthesis. Germacrene A is a precursor of several sesquiterpene lactones. The polypeptide is Germacrene A synthase (Tanacetum parthenium (Feverfew)).